The chain runs to 328 residues: Phosphate acyltransferase (328 aa).

This sequence belongs to the PlsX family. In terms of assembly, homodimer. Probably interacts with PlsY.

It localises to the cytoplasm. It carries out the reaction a fatty acyl-[ACP] + phosphate = an acyl phosphate + holo-[ACP]. Its pathway is lipid metabolism; phospholipid metabolism. Catalyzes the reversible formation of acyl-phosphate (acyl-PO(4)) from acyl-[acyl-carrier-protein] (acyl-ACP). This enzyme utilizes acyl-ACP as fatty acyl donor, but not acyl-CoA. The polypeptide is Phosphate acyltransferase (Staphylococcus aureus (strain Mu3 / ATCC 700698)).